A 250-amino-acid chain; its full sequence is Nuclear transcription factor Y subunit C-4 (250 aa).

The segment covering 1-10 (MDNNNNNNNQ) has biased composition (low complexity). Disordered regions lie at residues 1 to 35 (MDNNNNNNNQQPPPTSVYPPGSAVTTVIPPPPSGS) and 209 to 250 (GVYA…DSQG). Residues 214–225 (PPSQAWQSVWQN) show a composition bias toward polar residues. Residues 227–242 (AGGGDDVSYGSGGSSG) are compositionally biased toward gly residues.

Belongs to the NFYC/HAP5 subunit family. Heterotrimeric transcription factor composed of three components, NF-YA, NF-YB and NF-YC. NF-YB and NF-YC must interact and dimerize for NF-YA association and DNA binding. Ubiquitous. Present in etiolated seedlings.

It localises to the nucleus. Stimulates the transcription of various genes by recognizing and binding to a CCAAT motif in promoters. Involved in the abscisic acid (ABA) signaling pathway. The protein is Nuclear transcription factor Y subunit C-4 (NFYC4) of Arabidopsis thaliana (Mouse-ear cress).